A 392-amino-acid chain; its full sequence is Antitrypsin (392 aa).

Positions 1-16 are cleaved as a signal peptide; that stretch reads MKTIICLFTIAIAAMA.

This sequence belongs to the serpin family. As to expression, hemolymph.

The protein localises to the secreted. May play a role in the prophenoloxidase activating system in the silkworm hemolymph. The sequence is that of Antitrypsin from Bombyx mori (Silk moth).